Reading from the N-terminus, the 506-residue chain is PHD finger protein 10 (506 aa).

2 disordered regions span residues Met1–Gly66 and Asp293–Gly377. The segment covering Val23–Glu35 has biased composition (basic and acidic residues). Residues Gly52–Gly66 show a composition bias toward polar residues. An SAY region spans residues Met90–Leu299. Residues Ser326–Asp338 are compositionally biased toward low complexity. The span at Lys353–Lys367 shows a compositional bias: basic and acidic residues. The PHD-type 1; degenerate zinc-finger motif lies at Ile387–Cys444. The PHD-type 2; degenerate zinc-finger motif lies at Ile446–Val489.

The protein belongs to the SAYP family. Component of neural progenitors-specific chromatin remodeling complex (npBAF complex), a subfamily of ATP-dependent SWI/SNF chromatin remodeling complexes.

Its subcellular location is the nucleus. Involved in transcription activity regulation by chromatin remodeling in the context of the neural progenitors-specific chromatin remodeling complex (npBAF complex). May play a role in the proliferation of neural progenitors. In Xenopus laevis (African clawed frog), this protein is PHD finger protein 10 (phf10).